The primary structure comprises 514 residues: ATP synthase subunit alpha (514 aa).

Residue 170 to 177 (GDRQIGKT) participates in ATP binding.

This sequence belongs to the ATPase alpha/beta chains family. F-type ATPases have 2 components, CF(1) - the catalytic core - and CF(0) - the membrane proton channel. CF(1) has five subunits: alpha(3), beta(3), gamma(1), delta(1), epsilon(1). CF(0) has three main subunits: a(1), b(2) and c(9-12). The alpha and beta chains form an alternating ring which encloses part of the gamma chain. CF(1) is attached to CF(0) by a central stalk formed by the gamma and epsilon chains, while a peripheral stalk is formed by the delta and b chains.

The protein resides in the cell inner membrane. The catalysed reaction is ATP + H2O + 4 H(+)(in) = ADP + phosphate + 5 H(+)(out). Its function is as follows. Produces ATP from ADP in the presence of a proton gradient across the membrane. The alpha chain is a regulatory subunit. This chain is ATP synthase subunit alpha, found in Ectopseudomonas mendocina (strain ymp) (Pseudomonas mendocina).